The primary structure comprises 257 residues: K88 minor fimbrial subunit FaeJ (257 aa).

Residues 1–26 (MLNIIHRLKSGMFPALFFLTSASVLA) form the signal peptide.

It localises to the fimbrium. K88 minor fimbrial subunit, plays an essential role in the biogenesis of the K88 fimbriae. Fimbriae (also called pili), are polar filaments radiating from the surface of the bacterium to a length of 0.5-1.5 micrometers and numbering 100-300 per cell. They enable bacteria to colonize the epithelium of specific host organs. The protein is K88 minor fimbrial subunit FaeJ (faeJ) of Escherichia coli.